The chain runs to 257 residues: Probable enoyl-CoA hydratase echA17 (257 aa).

It belongs to the enoyl-CoA hydratase/isomerase family.

The enzyme catalyses a (3S)-3-hydroxyacyl-CoA = a (2E)-enoyl-CoA + H2O. It catalyses the reaction a 4-saturated-(3S)-3-hydroxyacyl-CoA = a (3E)-enoyl-CoA + H2O. Its function is as follows. Could possibly oxidize fatty acids using specific components. The polypeptide is Probable enoyl-CoA hydratase echA17 (echA17) (Mycolicibacterium paratuberculosis (strain ATCC BAA-968 / K-10) (Mycobacterium paratuberculosis)).